Reading from the N-terminus, the 120-residue chain is NAD(P)H-quinone oxidoreductase subunit 3, chloroplastic (120 aa).

A run of 3 helical transmembrane segments spans residues Ile-9–Gly-29, Met-64–Met-84, and Val-88–Ser-108.

The protein belongs to the complex I subunit 3 family. In terms of assembly, NDH is composed of at least 16 different subunits, 5 of which are encoded in the nucleus.

The protein localises to the plastid. It is found in the chloroplast thylakoid membrane. It carries out the reaction a plastoquinone + NADH + (n+1) H(+)(in) = a plastoquinol + NAD(+) + n H(+)(out). The enzyme catalyses a plastoquinone + NADPH + (n+1) H(+)(in) = a plastoquinol + NADP(+) + n H(+)(out). Functionally, NDH shuttles electrons from NAD(P)H:plastoquinone, via FMN and iron-sulfur (Fe-S) centers, to quinones in the photosynthetic chain and possibly in a chloroplast respiratory chain. The immediate electron acceptor for the enzyme in this species is believed to be plastoquinone. Couples the redox reaction to proton translocation, and thus conserves the redox energy in a proton gradient. This Vitis vinifera (Grape) protein is NAD(P)H-quinone oxidoreductase subunit 3, chloroplastic.